Here is a 532-residue protein sequence, read N- to C-terminus: Purple acid phosphatase 15 (532 aa).

The first 19 residues, 1 to 19, serve as a signal peptide directing secretion; sequence MTFLLLLLFCFLSPAISSA. A glycan (N-linked (GlcNAc...) asparagine) is linked at N136. Fe cation is bound at residue D194. N-linked (GlcNAc...) asparagine glycosylation is present at N200. The Fe cation site is built by D221 and Y224. D221 serves as a coordination point for Zn(2+). N-linked (GlcNAc...) asparagine glycans are attached at residues N231 and N264. N277 is a binding site for Zn(2+). N277 serves as a coordination point for substrate. Residues N286 and N301 are each glycosylated (N-linked (GlcNAc...) asparagine). Zn(2+) is bound at residue H359. H369 (proton donor) is an active-site residue. Residue H396 coordinates Zn(2+). 396–398 contacts substrate; sequence HVH. H398 is a binding site for Fe cation. An N-linked (GlcNAc...) asparagine glycan is attached at N491.

It belongs to the metallophosphoesterase superfamily. Purple acid phosphatase family. In terms of assembly, homodimer. Fe cation is required as a cofactor. Zn(2+) serves as cofactor. As to expression, expressed in roots, stems, cotyledons, leaves, flowers and siliques.

The protein resides in the secreted. The enzyme catalyses 1D-myo-inositol hexakisphosphate + H2O = 1D-myo-inositol 1,2,3,5,6-pentakisphosphate + phosphate. It carries out the reaction a phosphate monoester + H2O = an alcohol + phosphate. Functionally, acid phosphatase activity with p-nitrophenyl phosphate (pNPP), D-myoinositol 1-phosphate (Ins(1)P1), phytic acid and Myo-inositol hexakisphosphate. Low or no activity with Glc-6-P and ATP. Confers shoot growth stimulation, enhanced salt and osmotic stress tolerance, and ABA insensitivity. May modulate ascorbic acid (AsA) levels by controlling the input of myoinositol into this branch of AsA biosynthesis. This chain is Purple acid phosphatase 15 (PAP15), found in Arabidopsis thaliana (Mouse-ear cress).